A 243-amino-acid polypeptide reads, in one-letter code: Ubiquinone/menaquinone biosynthesis C-methyltransferase UbiE (243 aa).

S-adenosyl-L-methionine is bound by residues T69, D90, and 116-117; that span reads DA.

It belongs to the class I-like SAM-binding methyltransferase superfamily. MenG/UbiE family.

The catalysed reaction is a 2-demethylmenaquinol + S-adenosyl-L-methionine = a menaquinol + S-adenosyl-L-homocysteine + H(+). It catalyses the reaction a 2-methoxy-6-(all-trans-polyprenyl)benzene-1,4-diol + S-adenosyl-L-methionine = a 5-methoxy-2-methyl-3-(all-trans-polyprenyl)benzene-1,4-diol + S-adenosyl-L-homocysteine + H(+). It participates in quinol/quinone metabolism; menaquinone biosynthesis; menaquinol from 1,4-dihydroxy-2-naphthoate: step 2/2. It functions in the pathway cofactor biosynthesis; ubiquinone biosynthesis. Functionally, methyltransferase required for the conversion of demethylmenaquinol (DMKH2) to menaquinol (MKH2) and the conversion of 2-polyprenyl-6-methoxy-1,4-benzoquinol (DDMQH2) to 2-polyprenyl-3-methyl-6-methoxy-1,4-benzoquinol (DMQH2). The protein is Ubiquinone/menaquinone biosynthesis C-methyltransferase UbiE of Cupriavidus pinatubonensis (strain JMP 134 / LMG 1197) (Cupriavidus necator (strain JMP 134)).